Reading from the N-terminus, the 270-residue chain is Tetraspanin-14 (270 aa).

At 1–17 the chain is on the cytoplasmic side; the sequence is MHYYRYSNAKVSCWYKY. The helical transmembrane segment at 18-38 threads the bilayer; the sequence is LLFSYNIIFWLAGVVFLGVGL. Residues 39-61 lie on the Extracellular side of the membrane; the sequence is WAWSEKGVLSDLTKVTRMHGIDP. The helical transmembrane segment at 62–82 threads the bilayer; that stretch reads VVLVLMVGVVMFTLGFAGCVG. At 83-92 the chain is on the cytoplasmic side; that stretch reads ALRENICLLN. Residues 93-113 traverse the membrane as a helical segment; the sequence is FFCGTIVLIFFLELAVAVLAF. Over 114–232 the chain is Extracellular; sequence LFQDWVRDRF…QALESWLPRN (119 aa). Positions 114–232 are necessary and sufficient for interaction with ADAM10; the sequence is LFQDWVRDRF…QALESWLPRN (119 aa). Disulfide bonds link Cys-153–Cys-221, Cys-154–Cys-186, Cys-170–Cys-180, and Cys-187–Cys-200. Residue Asn-169 is glycosylated (N-linked (GlcNAc...) asparagine). Residues 233–253 traverse the membrane as a helical segment; it reads IYIVAGVFIAISLLQIFGIFL. Residues 254–270 are Cytoplasmic-facing; sequence ARTLISDIEAVKAGHHF.

It belongs to the tetraspanin (TM4SF) family. Interacts with ADAM10; the interaction promotes ADAM10 maturation and cell surface expression.

It localises to the cell membrane. Functionally, part of TspanC8 subgroup, composed of 6 members that interact with the transmembrane metalloprotease ADAM10. This interaction is required for ADAM10 exit from the endoplasmic reticulum and for enzymatic maturation and trafficking to the cell surface as well as substrate specificity. Different TspanC8/ADAM10 complexes have distinct substrates. Negatively regulates ADAM10-mediated cleavage of GP6. Promotes ADAM10-mediated cleavage of CDH5. The chain is Tetraspanin-14 from Homo sapiens (Human).